The chain runs to 179 residues: Negative modulator of initiation of replication (179 aa).

The interaction with DNA stretch occupies residues 86-87 (AV).

It belongs to the SeqA family. As to quaternary structure, homodimer. Polymerizes to form helical filaments.

It is found in the cytoplasm. Functionally, negative regulator of replication initiation, which contributes to regulation of DNA replication and ensures that replication initiation occurs exactly once per chromosome per cell cycle. Binds to pairs of hemimethylated GATC sequences in the oriC region, thus preventing assembly of replication proteins and re-initiation at newly replicated origins. Repression is relieved when the region becomes fully methylated. This chain is Negative modulator of initiation of replication, found in Shewanella woodyi (strain ATCC 51908 / MS32).